The primary structure comprises 372 residues: NAD(P)H-quinone oxidoreductase subunit 1 (372 aa).

Transmembrane regions (helical) follow at residues 31–51 (PLPM…VVWL), 65–85 (PEFI…KLVL), 97–117 (LLFT…YLIL), 128–148 (VGLG…GLLM), 176–196 (LALS…VDIV), 254–276 (FALF…AVLY), 304–324 (LIFA…LIFL), and 347–367 (FLLP…LAFP).

It belongs to the complex I subunit 1 family. In terms of assembly, NDH-1 is composed of at least 11 different subunits.

Its subcellular location is the cellular thylakoid membrane. It catalyses the reaction a plastoquinone + NADH + (n+1) H(+)(in) = a plastoquinol + NAD(+) + n H(+)(out). The enzyme catalyses a plastoquinone + NADPH + (n+1) H(+)(in) = a plastoquinol + NADP(+) + n H(+)(out). In terms of biological role, NDH-1 shuttles electrons from an unknown electron donor, via FMN and iron-sulfur (Fe-S) centers, to quinones in the respiratory and/or the photosynthetic chain. The immediate electron acceptor for the enzyme in this species is believed to be plastoquinone. Couples the redox reaction to proton translocation, and thus conserves the redox energy in a proton gradient. The polypeptide is NAD(P)H-quinone oxidoreductase subunit 1 (Leptolyngbya boryana (Plectonema boryanum)).